The primary structure comprises 455 residues: tRNA-2-methylthio-N(6)-dimethylallyladenosine synthase (455 aa).

The 121-residue stretch at 10-130 (RKVFIKTYGC…LPDALKRVRR (121 aa)) folds into the MTTase N-terminal domain. [4Fe-4S] cluster is bound by residues cysteine 19, cysteine 55, cysteine 93, cysteine 171, cysteine 175, and cysteine 178. One can recognise a Radical SAM core domain in the interval 157–389 (RSRGVTAFLT…QALLLRQQKE (233 aa)). The 63-residue stretch at 392–454 (ESLVGKTMDV…PNSLFAEVAG (63 aa)) folds into the TRAM domain.

This sequence belongs to the methylthiotransferase family. MiaB subfamily. Monomer. [4Fe-4S] cluster serves as cofactor.

The protein localises to the cytoplasm. The catalysed reaction is N(6)-dimethylallyladenosine(37) in tRNA + (sulfur carrier)-SH + AH2 + 2 S-adenosyl-L-methionine = 2-methylsulfanyl-N(6)-dimethylallyladenosine(37) in tRNA + (sulfur carrier)-H + 5'-deoxyadenosine + L-methionine + A + S-adenosyl-L-homocysteine + 2 H(+). Catalyzes the methylthiolation of N6-(dimethylallyl)adenosine (i(6)A), leading to the formation of 2-methylthio-N6-(dimethylallyl)adenosine (ms(2)i(6)A) at position 37 in tRNAs that read codons beginning with uridine. The polypeptide is tRNA-2-methylthio-N(6)-dimethylallyladenosine synthase (Agrobacterium fabrum (strain C58 / ATCC 33970) (Agrobacterium tumefaciens (strain C58))).